The following is a 907-amino-acid chain: Protein translocase subunit SecA (907 aa).

Residues glutamine 87, 105–109, and aspartate 512 contribute to the ATP site; that span reads GEGKT. Residues cysteine 891, cysteine 893, cysteine 902, and histidine 903 each contribute to the Zn(2+) site.

Belongs to the SecA family. Monomer and homodimer. Part of the essential Sec protein translocation apparatus which comprises SecA, SecYEG and auxiliary proteins SecDF-YajC and YidC. Zn(2+) serves as cofactor.

The protein resides in the cell inner membrane. The protein localises to the cytoplasm. The catalysed reaction is ATP + H2O + cellular proteinSide 1 = ADP + phosphate + cellular proteinSide 2.. Functionally, part of the Sec protein translocase complex. Interacts with the SecYEG preprotein conducting channel. Has a central role in coupling the hydrolysis of ATP to the transfer of proteins into and across the cell membrane, serving both as a receptor for the preprotein-SecB complex and as an ATP-driven molecular motor driving the stepwise translocation of polypeptide chains across the membrane. In Shewanella loihica (strain ATCC BAA-1088 / PV-4), this protein is Protein translocase subunit SecA.